Reading from the N-terminus, the 439-residue chain is Choline monooxygenase, chloroplastic (439 aa).

Residues 1–60 (MMAASASATTMLLKYPTTVCGIPNPSSNNNNDPSNNIVSIPQNTTNPTLKSRTPNKITTN) constitute a chloroplast transit peptide. Residues 24–41 (NPSSNNNNDPSNNIVSIP) are compositionally biased toward low complexity. Residues 24–54 (NPSSNNNNDPSNNIVSIPQNTTNPTLKSRTP) are disordered. Positions 42 to 54 (QNTTNPTLKSRTP) are enriched in polar residues. A Rieske domain is found at 120-227 (WQVAGISDQI…VAVWGPFVLI (108 aa)). Residues cysteine 162, histidine 164, cysteine 181, and histidine 184 each coordinate [2Fe-2S] cluster. Fe cation-binding residues include histidine 287 and histidine 292.

As to quaternary structure, homotrimer or homodimer. Requires [2Fe-2S] cluster as cofactor. It depends on Fe cation as a cofactor. Mg(2+) is required as a cofactor. As to expression, expressed in leaves.

Its subcellular location is the plastid. The protein localises to the chloroplast stroma. The catalysed reaction is choline + 2 reduced [2Fe-2S]-[ferredoxin] + O2 + 2 H(+) = betaine aldehyde hydrate + 2 oxidized [2Fe-2S]-[ferredoxin] + H2O. It participates in amine and polyamine biosynthesis; betaine biosynthesis via choline pathway; betaine aldehyde from choline (monooxygenase route): step 1/1. In terms of biological role, catalyzes the first step of the osmoprotectant glycine betaine synthesis. This is Choline monooxygenase, chloroplastic (CMO) from Spinacia oleracea (Spinach).